We begin with the raw amino-acid sequence, 87 residues long: U3-theraphotoxin-Hhn1a 13 (87 aa).

An N-terminal signal peptide occupies residues 1–24 (MVNMKASMFLTSAGLVPLFVVCYA). Positions 25–52 (SESEEKEFPKEMLSSIFAVDNDFKQEER) are excised as a propeptide. 3 cysteine pairs are disulfide-bonded: Cys54/Cys67, Cys61/Cys72, and Cys66/Cys79.

This sequence belongs to the neurotoxin 10 (Hwtx-1) family. 51 (Hntx-8) subfamily. Hntx-8 sub-subfamily. In terms of tissue distribution, expressed by the venom gland.

Its subcellular location is the secreted. In terms of biological role, ion channel inhibitor. The polypeptide is U3-theraphotoxin-Hhn1a 13 (Cyriopagopus hainanus (Chinese bird spider)).